The sequence spans 185 residues: MVKLGNNFAEKGTKQPLLEDGFDTIPLMTPLDVNQLQFPPPDKVVVKTKTEYEPDRKKGKARPPQIAEFTVSITEGVTERFKVSVLVLFALAFLTCVVFLVVYKVYKYDRACPDGFVLKNTQCIPEGLESYYAEQDSSAREKFYTVINHYNLAKQSITRSVSPWMSVLSEEKLSEQETEAAEKSA.

Over 1–82 the chain is Cytoplasmic; the sequence is MVKLGNNFAE…ITEGVTERFK (82 aa). A helical; Signal-anchor for type II membrane protein transmembrane segment spans residues 83 to 103; that stretch reads VSVLVLFALAFLTCVVFLVVY. At 104–185 the chain is on the lumenal side; the sequence is KVYKYDRACP…QETEAAEKSA (82 aa). A required for GRIP1 interaction region spans residues 129-164; the sequence is ESYYAEQDSSAREKFYTVINHYNLAKQSITRSVSPW.

It belongs to the NSG family. Forms a complex with GRIP1, GRIA2 and STX12 through direct interaction with GRIP1; controls the intracellular fate of AMPAR and the endosomal sorting of the GRIA2 subunit toward recycling and membrane targeting. Interacts with STX12. Interacts with APP; could regulate APP processing. Interacts with FAM171A1.

The protein resides in the membrane. It is found in the golgi apparatus. The protein localises to the trans-Golgi network membrane. Its subcellular location is the endosome membrane. It localises to the cell projection. The protein resides in the dendrite. It is found in the early endosome membrane. The protein localises to the late endosome membrane. Its subcellular location is the lysosome lumen. It localises to the recycling endosome membrane. The protein resides in the cytoplasmic vesicle membrane. It is found in the golgi stack membrane. The protein localises to the endosome. Its subcellular location is the multivesicular body membrane. It localises to the endoplasmic reticulum membrane. Its function is as follows. Plays a role in the recycling mechanism in neurons of multiple receptors, including AMPAR, APP and L1CAM and acts at the level of early endosomes to promote sorting of receptors toward a recycling pathway. Regulates sorting and recycling of GRIA2 through interaction with GRIP1 and then contributes to the regulation of synaptic transmission and plasticity by affecting the recycling and targeting of AMPA receptors to the synapse. Is required for faithful sorting of L1CAM to axons by facilitating trafficking from somatodendritic early endosome or the recycling endosome. In an other hand, induces apoptosis via the activation of CASP3 in response to DNA damage. This chain is Neuronal vesicle trafficking-associated protein 1, found in Macaca fascicularis (Crab-eating macaque).